The primary structure comprises 545 residues: Chaperonin GroEL (545 aa).

ATP is bound by residues 30–33, Lys-51, 87–91, Gly-415, and Asp-495; these read TLGP and DGTTT.

It belongs to the chaperonin (HSP60) family. Forms a cylinder of 14 subunits composed of two heptameric rings stacked back-to-back. Interacts with the co-chaperonin GroES.

It is found in the cytoplasm. It carries out the reaction ATP + H2O + a folded polypeptide = ADP + phosphate + an unfolded polypeptide.. Functionally, together with its co-chaperonin GroES, plays an essential role in assisting protein folding. The GroEL-GroES system forms a nano-cage that allows encapsulation of the non-native substrate proteins and provides a physical environment optimized to promote and accelerate protein folding. This Shewanella oneidensis (strain ATCC 700550 / JCM 31522 / CIP 106686 / LMG 19005 / NCIMB 14063 / MR-1) protein is Chaperonin GroEL.